A 431-amino-acid polypeptide reads, in one-letter code: Adenylosuccinate synthetase (431 aa).

GTP contacts are provided by residues 12-18 (GDEGKGK) and 40-42 (GHT). Catalysis depends on D13, which acts as the Proton acceptor. Positions 13 and 40 each coordinate Mg(2+). IMP-binding positions include 13 to 16 (DEGK), 38 to 41 (NAGH), T129, R143, Q224, and T239. The active-site Proton donor is the H41. An Isoglutamyl lysine isopeptide (Lys-Gln) (interchain with Q-Cter in protein Pup) cross-link involves residue K292. 299-305 (VTTGRAR) provides a ligand contact to substrate. Residue R303 coordinates IMP. GTP contacts are provided by residues R305, 331-333 (KLD), and 413-415 (GVG).

This sequence belongs to the adenylosuccinate synthetase family. As to quaternary structure, homodimer. The cofactor is Mg(2+).

The protein localises to the cytoplasm. It catalyses the reaction IMP + L-aspartate + GTP = N(6)-(1,2-dicarboxyethyl)-AMP + GDP + phosphate + 2 H(+). It participates in purine metabolism; AMP biosynthesis via de novo pathway; AMP from IMP: step 1/2. Plays an important role in the de novo pathway of purine nucleotide biosynthesis. Catalyzes the first committed step in the biosynthesis of AMP from IMP. The sequence is that of Adenylosuccinate synthetase from Mycolicibacterium smegmatis (strain ATCC 700084 / mc(2)155) (Mycobacterium smegmatis).